The primary structure comprises 331 residues: Ketol-acid reductoisomerase (NADP(+)) (331 aa).

The KARI N-terminal Rossmann domain occupies 2–182 (ARMYYDADAQ…GGTRAGILET (181 aa)). NADP(+) contacts are provided by residues 25 to 28 (YGSQ), serine 51, serine 53, and 83 to 86 (DEVQ). The active site involves histidine 108. Glycine 134 contacts NADP(+). Residues 183-328 (TFREETETDL…QELRSMFSWL (146 aa)) form the KARI C-terminal knotted domain. Residues aspartate 191, glutamate 195, glutamate 227, and glutamate 231 each contribute to the Mg(2+) site. Substrate is bound at residue serine 252.

The protein belongs to the ketol-acid reductoisomerase family. The cofactor is Mg(2+).

It carries out the reaction (2R)-2,3-dihydroxy-3-methylbutanoate + NADP(+) = (2S)-2-acetolactate + NADPH + H(+). The catalysed reaction is (2R,3R)-2,3-dihydroxy-3-methylpentanoate + NADP(+) = (S)-2-ethyl-2-hydroxy-3-oxobutanoate + NADPH + H(+). It functions in the pathway amino-acid biosynthesis; L-isoleucine biosynthesis; L-isoleucine from 2-oxobutanoate: step 2/4. It participates in amino-acid biosynthesis; L-valine biosynthesis; L-valine from pyruvate: step 2/4. Its function is as follows. Involved in the biosynthesis of branched-chain amino acids (BCAA). Catalyzes an alkyl-migration followed by a ketol-acid reduction of (S)-2-acetolactate (S2AL) to yield (R)-2,3-dihydroxy-isovalerate. In the isomerase reaction, S2AL is rearranged via a Mg-dependent methyl migration to produce 3-hydroxy-3-methyl-2-ketobutyrate (HMKB). In the reductase reaction, this 2-ketoacid undergoes a metal-dependent reduction by NADPH to yield (R)-2,3-dihydroxy-isovalerate. The polypeptide is Ketol-acid reductoisomerase (NADP(+)) (Thermosynechococcus vestitus (strain NIES-2133 / IAM M-273 / BP-1)).